A 362-amino-acid chain; its full sequence is 3-isopropylmalate dehydrogenase (362 aa).

Position 77–88 (77–88 (GPKWGTGSVRPE)) interacts with NAD(+). The substrate site is built by Arg95, Arg105, Arg134, and Asp223. Mg(2+) contacts are provided by Asp223, Asp248, and Asp252. Position 287 to 298 (287 to 298 (GSAPDLPKGKVN)) interacts with NAD(+).

It belongs to the isocitrate and isopropylmalate dehydrogenases family. As to quaternary structure, homodimer. The cofactor is Mg(2+). It depends on Mn(2+) as a cofactor.

It is found in the cytoplasm. It catalyses the reaction (2R,3S)-3-isopropylmalate + NAD(+) = 4-methyl-2-oxopentanoate + CO2 + NADH. The protein operates within amino-acid biosynthesis; L-leucine biosynthesis; L-leucine from 3-methyl-2-oxobutanoate: step 3/4. In terms of biological role, catalyzes the oxidation of 3-carboxy-2-hydroxy-4-methylpentanoate (3-isopropylmalate) to 3-carboxy-4-methyl-2-oxopentanoate. The product decarboxylates to 4-methyl-2 oxopentanoate. This chain is 3-isopropylmalate dehydrogenase (LEU2), found in Zygosaccharomyces rouxii (strain ATCC 2623 / CBS 732 / NBRC 1130 / NCYC 568 / NRRL Y-229).